Here is a 293-residue protein sequence, read N- to C-terminus: uncharacterized protein (293 aa).

Disordered stretches follow at residues 121-154 and 254-274; these read NLNF…SQNS and DILQ…PQQQ. Residues 133–149 are compositionally biased toward basic residues; that stretch reads SYHHHSHSHSHHSHSHS. Residues 260-272 show a composition bias toward pro residues; sequence PPSPTPTPPPPPQ.

This is an uncharacterized protein from Dictyostelium discoideum (Social amoeba).